A 902-amino-acid polypeptide reads, in one-letter code: Protein translocase subunit SecA (902 aa).

ATP-binding positions include glutamine 87, 105-109 (GEGKT), and aspartate 512. Residues 836 to 902 (DVEKVEEQHR…KFKQCCGKLK (67 aa)) are disordered. The segment covering 840–863 (VEEQHRKSENAPREYQHEEVEHVG) has biased composition (basic and acidic residues). Residues cysteine 886, cysteine 888, cysteine 897, and cysteine 898 each contribute to the Zn(2+) site.

It belongs to the SecA family. Monomer and homodimer. Part of the essential Sec protein translocation apparatus which comprises SecA, SecYEG and auxiliary proteins SecDF-YajC and YidC. It depends on Zn(2+) as a cofactor.

Its subcellular location is the cell inner membrane. It localises to the cytoplasm. The catalysed reaction is ATP + H2O + cellular proteinSide 1 = ADP + phosphate + cellular proteinSide 2.. Functionally, part of the Sec protein translocase complex. Interacts with the SecYEG preprotein conducting channel. Has a central role in coupling the hydrolysis of ATP to the transfer of proteins into and across the cell membrane, serving both as a receptor for the preprotein-SecB complex and as an ATP-driven molecular motor driving the stepwise translocation of polypeptide chains across the membrane. This chain is Protein translocase subunit SecA, found in Pseudoalteromonas translucida (strain TAC 125).